The chain runs to 220 residues: Deoxyribose-phosphate aldolase (220 aa).

The Proton donor/acceptor role is filled by aspartate 89. Residue lysine 151 is the Schiff-base intermediate with acetaldehyde of the active site. Lysine 180 serves as the catalytic Proton donor/acceptor.

This sequence belongs to the DeoC/FbaB aldolase family. DeoC type 1 subfamily. In terms of assembly, homotetramer, in solution and in the crystal structure.

The protein localises to the cytoplasm. The enzyme catalyses 2-deoxy-D-ribose 5-phosphate = D-glyceraldehyde 3-phosphate + acetaldehyde. It participates in carbohydrate degradation; 2-deoxy-D-ribose 1-phosphate degradation; D-glyceraldehyde 3-phosphate and acetaldehyde from 2-deoxy-alpha-D-ribose 1-phosphate: step 2/2. Functionally, catalyzes a reversible aldol reaction between acetaldehyde and D-glyceraldehyde 3-phosphate to generate 2-deoxy-D-ribose 5-phosphate. The chain is Deoxyribose-phosphate aldolase from Thermus thermophilus (strain ATCC 27634 / DSM 579 / HB8).